The chain runs to 196 residues: MTENSAAAPAGKPKRSKASKKATDHPKYSDMILAAVQAEKSRSGSSRQSIQKYIKNHYKVGENADSQIKLSIKRLVTSGTLKQTKGVGASGSFRLAKADEGKKPAKKPKKEIKKAASPKKAAKPKKAAKSPAKAKKPKVAEKKVKKPAKKKPAPSPKKAKKTKTVKAKPVRASRVKKAKPSKPKAKASPKKSGRKK.

2 disordered regions span residues 1–29 and 78–196; these read MTEN…PKYS and SGTL…GRKK. One can recognise an H15 domain in the interval 24 to 97; it reads DHPKYSDMIL…GASGSFRLAK (74 aa). Positions 104-196 are enriched in basic residues; sequence PAKKPKKEIK…ASPKKSGRKK (93 aa).

It belongs to the histone H1/H5 family.

The protein resides in the nucleus. It localises to the chromosome. Functionally, histones H1 are necessary for the condensation of nucleosome chains into higher-order structures. The histones H1.0 are found in cells that are in terminal stages of differentiation or that have low rates of cell division. The sequence is that of Histone H1.0 (h1-0) from Xenopus tropicalis (Western clawed frog).